We begin with the raw amino-acid sequence, 476 residues long: ATP synthase subunit beta (476 aa).

153–160 (GGAGVGKT) provides a ligand contact to ATP.

Belongs to the ATPase alpha/beta chains family. As to quaternary structure, F-type ATPases have 2 components, CF(1) - the catalytic core - and CF(0) - the membrane proton channel. CF(1) has five subunits: alpha(3), beta(3), gamma(1), delta(1), epsilon(1). CF(0) has three main subunits: a(1), b(2) and c(9-12). The alpha and beta chains form an alternating ring which encloses part of the gamma chain. CF(1) is attached to CF(0) by a central stalk formed by the gamma and epsilon chains, while a peripheral stalk is formed by the delta and b chains.

The protein localises to the cell membrane. The enzyme catalyses ATP + H2O + 4 H(+)(in) = ADP + phosphate + 5 H(+)(out). In terms of biological role, produces ATP from ADP in the presence of a proton gradient across the membrane. The catalytic sites are hosted primarily by the beta subunits. The protein is ATP synthase subunit beta of Latilactobacillus sakei subsp. sakei (strain 23K) (Lactobacillus sakei subsp. sakei).